A 445-amino-acid chain; its full sequence is tRNA-2-methylthio-N(6)-dimethylallyladenosine synthase (445 aa).

Residues 3–124 (KKLYIKTYGC…LPELISKVVR (122 aa)) form the MTTase N-terminal domain. Residues C12, C48, C87, C162, C166, and C169 each contribute to the [4Fe-4S] cluster site. Positions 148–380 (YTQGASSFIS…QKELATQQLA (233 aa)) constitute a Radical SAM core domain. In terms of domain architecture, TRAM spans 383-445 (ESCVGSTMKV…ALNSLTGEIL (63 aa)).

It belongs to the methylthiotransferase family. MiaB subfamily. Monomer. The cofactor is [4Fe-4S] cluster.

The protein localises to the cytoplasm. The catalysed reaction is N(6)-dimethylallyladenosine(37) in tRNA + (sulfur carrier)-SH + AH2 + 2 S-adenosyl-L-methionine = 2-methylsulfanyl-N(6)-dimethylallyladenosine(37) in tRNA + (sulfur carrier)-H + 5'-deoxyadenosine + L-methionine + A + S-adenosyl-L-homocysteine + 2 H(+). Its function is as follows. Catalyzes the methylthiolation of N6-(dimethylallyl)adenosine (i(6)A), leading to the formation of 2-methylthio-N6-(dimethylallyl)adenosine (ms(2)i(6)A) at position 37 in tRNAs that read codons beginning with uridine. This is tRNA-2-methylthio-N(6)-dimethylallyladenosine synthase from Rickettsia typhi (strain ATCC VR-144 / Wilmington).